A 549-amino-acid polypeptide reads, in one-letter code: CDK5RAP3 protein homolog (549 aa).

3 consecutive short sequence motifs (shuffled ATG8-binding motif) follow at residues 274 to 277 (IDWD), 285 to 288 (IDWD), and 333 to 336 (ISWD).

This sequence belongs to the CDK5RAP3 family. Substrate adapter component of the UFM1 ribosome E3 ligase (UREL) complex. Interacts with ATG8 family proteins.

Substrate adapter of E3 ligase complexes mediating ufmylation, the covalent attachment of the ubiquitin-like modifier UFM1 to substrate proteins, and which is involved in various processes, such as ribosome recycling and reticulophagy (also called ER-phagy). The polypeptide is CDK5RAP3 protein homolog (Arabidopsis thaliana (Mouse-ear cress)).